Reading from the N-terminus, the 63-residue chain is Large ribosomal subunit protein uL30 (63 aa).

It belongs to the universal ribosomal protein uL30 family. Part of the 50S ribosomal subunit.

The protein is Large ribosomal subunit protein uL30 of Xylella fastidiosa (strain M23).